Consider the following 138-residue polypeptide: Cysteine desulfuration protein SufE (138 aa).

C51 (cysteine persulfide intermediate) is an active-site residue.

It belongs to the SufE family. Homodimer. Interacts with SufS.

The protein resides in the cytoplasm. It participates in cofactor biosynthesis; iron-sulfur cluster biosynthesis. Its function is as follows. Participates in cysteine desulfuration mediated by SufS. Cysteine desulfuration mobilizes sulfur from L-cysteine to yield L-alanine and constitutes an essential step in sulfur metabolism for biosynthesis of a variety of sulfur-containing biomolecules. Functions as a sulfur acceptor for SufS, by mediating the direct transfer of the sulfur atom from the S-sulfanylcysteine of SufS, an intermediate product of cysteine desulfuration process. The protein is Cysteine desulfuration protein SufE of Escherichia coli O6:K15:H31 (strain 536 / UPEC).